The following is a 258-amino-acid chain: Protein CHAPERONE-LIKE PROTEIN OF POR1, chloroplastic (258 aa).

Residues 1–48 (MSSSLLLSGSTVSSSFIAPSKPSLVRNSSKTSLLPFRNVSRSFKTVKC) constitute a chloroplast transit peptide. An N-acetylthreonine modification is found at Thr49. A J-like domain required for holdase chaperone activity region spans residues 67-122 (WDPYKRLGVSPYASEEEIWASRNFLLQQYAGHERSEESIEGAFEKLLMSSFIRRKK). 3 helical membrane passes run 162 to 182 (FLFA…GPAF), 207 to 227 (LIGI…IPMI), and 237 to 257 (TLEL…CTFL).

This sequence belongs to the chaperone-like protein of POR1 protein family. As to quaternary structure, interacts with PORB in chloroplast. Interacts with PORA during plastid import. In terms of tissue distribution, expressed ubiquitously with higher levels in young leaves, flowers, and the root elongation zone.

It is found in the mitochondrion membrane. The protein localises to the plastid. It localises to the chloroplast envelope. Its subcellular location is the chloroplast thylakoid membrane. Functionally, essential protein required during embryogenesis. Exhibits holdase chaperone activity involved in the stabilization of NADPH:protochlorophyllide oxidoreductase (POR) proteins against photooxidative stress during POR proteins import into chloroplasts. Required for chloroplast biogenesis and development. When expressed in yeast, triggers mitochondria-mediated cell death associated with the loss of mitochondrial membrane potential. This Arabidopsis thaliana (Mouse-ear cress) protein is Protein CHAPERONE-LIKE PROTEIN OF POR1, chloroplastic.